The following is a 172-amino-acid chain: Allergen Bos d 2 (172 aa).

The N-terminal stretch at 1 to 16 (MKAVFLTLLFGLVCTA) is a signal peptide. The residue at position 17 (Q17) is a Pyrrolidone carboxylic acid. Cystine bridges form between C60–C64 and C79–C170.

Belongs to the calycin superfamily. Lipocalin family. In terms of tissue distribution, found exclusively in skin. Produced in sweat glands and transported to the skin surface.

It localises to the secreted. Its function is as follows. Probable pheromone carrier. The polypeptide is Allergen Bos d 2 (Bos taurus (Bovine)).